A 356-amino-acid chain; its full sequence is UDP-N-acetylglucosamine--N-acetylmuramyl-(pentapeptide) pyrophosphoryl-undecaprenol N-acetylglucosamine transferase (356 aa).

UDP-N-acetyl-alpha-D-glucosamine-binding positions include 11-13 (TAG), Asn-123, Arg-159, and Ser-192.

It belongs to the glycosyltransferase 28 family. MurG subfamily.

It is found in the cell membrane. The catalysed reaction is di-trans,octa-cis-undecaprenyl diphospho-N-acetyl-alpha-D-muramoyl-L-alanyl-D-glutamyl-meso-2,6-diaminopimeloyl-D-alanyl-D-alanine + UDP-N-acetyl-alpha-D-glucosamine = di-trans,octa-cis-undecaprenyl diphospho-[N-acetyl-alpha-D-glucosaminyl-(1-&gt;4)]-N-acetyl-alpha-D-muramoyl-L-alanyl-D-glutamyl-meso-2,6-diaminopimeloyl-D-alanyl-D-alanine + UDP + H(+). Its pathway is cell wall biogenesis; peptidoglycan biosynthesis. In terms of biological role, cell wall formation. Catalyzes the transfer of a GlcNAc subunit on undecaprenyl-pyrophosphoryl-MurNAc-pentapeptide (lipid intermediate I) to form undecaprenyl-pyrophosphoryl-MurNAc-(pentapeptide)GlcNAc (lipid intermediate II). The polypeptide is UDP-N-acetylglucosamine--N-acetylmuramyl-(pentapeptide) pyrophosphoryl-undecaprenol N-acetylglucosamine transferase (Tropheryma whipplei (strain Twist) (Whipple's bacillus)).